Here is a 314-residue protein sequence, read N- to C-terminus: Pathogenicity locus probable regulatory protein HrpR (314 aa).

In terms of domain architecture, Sigma-54 factor interaction spans 11-239 (TRWNVTALSA…LKSAANAICP (229 aa)). Residues 39-46 (GETGTGKD) and 101-110 (SNGGTLYLDE) each bind ATP. The segment at residues 281-300 (FDAVLEELELPRRTLYHRMK) is a DNA-binding region (H-T-H motif).

Member of the two-component regulatory system HrpR/HrpS that regulates the activation of the sigma factor hrpL which itself induces the expression of hprD as well as other hrp loci which are involved in plant pathogenicity, hrmA and avr genes. Probably interacts with sigma-54. The polypeptide is Pathogenicity locus probable regulatory protein HrpR (hrpR) (Pseudomonas syringae pv. syringae).